A 32-amino-acid polypeptide reads, in one-letter code: Cytochrome b6-f complex subunit 7 (32 aa).

Residues 9–27 (AVVFWVLIPVGLAGGALLL) traverse the membrane as a helical segment.

The protein belongs to the PetM family. As to quaternary structure, the 4 large subunits of the cytochrome b6-f complex are cytochrome b6, subunit IV (17 kDa polypeptide, PetD), cytochrome f and the Rieske protein, while the 4 small subunits are PetG, PetL, PetM and PetN. The complex functions as a dimer.

Its subcellular location is the cellular thylakoid membrane. Functionally, component of the cytochrome b6-f complex, which mediates electron transfer between photosystem II (PSII) and photosystem I (PSI), cyclic electron flow around PSI, and state transitions. This chain is Cytochrome b6-f complex subunit 7, found in Synechococcus sp. (strain CC9311).